A 160-amino-acid polypeptide reads, in one-letter code: Cytochrome b6-f complex subunit 4 (160 aa).

A run of 4 helical transmembrane segments spans residues 36-56 (LLYI…GLAV), 68-88 (PFAT…FQIL), 95-115 (FFGV…PFLE), and 131-151 (SVFL…VLPI).

This sequence belongs to the cytochrome b family. PetD subfamily. The 4 large subunits of the cytochrome b6-f complex are cytochrome b6, subunit IV (17 kDa polypeptide, petD), cytochrome f and the Rieske protein, while the 4 small subunits are petG, petL, petM and petN. The complex functions as a dimer.

It localises to the plastid. Its subcellular location is the chloroplast thylakoid membrane. Functionally, component of the cytochrome b6-f complex, which mediates electron transfer between photosystem II (PSII) and photosystem I (PSI), cyclic electron flow around PSI, and state transitions. This is Cytochrome b6-f complex subunit 4 from Welwitschia mirabilis (Tree tumbo).